We begin with the raw amino-acid sequence, 391 residues long: Chaperone protein DnaJ (391 aa).

The region spanning aspartate 2–glycine 67 is the J domain. A CR-type zinc finger spans residues glycine 148 to lysine 226. Positions 161, 164, 178, 181, 200, 203, 214, and 217 each coordinate Zn(2+). CXXCXGXG motif repeat units follow at residues cysteine 161 to glycine 168, cysteine 178 to glycine 185, cysteine 200 to glycine 207, and cysteine 214 to glycine 221.

This sequence belongs to the DnaJ family. In terms of assembly, homodimer. The cofactor is Zn(2+).

It localises to the cytoplasm. Its function is as follows. Participates actively in the response to hyperosmotic and heat shock by preventing the aggregation of stress-denatured proteins and by disaggregating proteins, also in an autonomous, DnaK-independent fashion. Unfolded proteins bind initially to DnaJ; upon interaction with the DnaJ-bound protein, DnaK hydrolyzes its bound ATP, resulting in the formation of a stable complex. GrpE releases ADP from DnaK; ATP binding to DnaK triggers the release of the substrate protein, thus completing the reaction cycle. Several rounds of ATP-dependent interactions between DnaJ, DnaK and GrpE are required for fully efficient folding. Also involved, together with DnaK and GrpE, in the DNA replication of plasmids through activation of initiation proteins. The protein is Chaperone protein DnaJ of Chlamydia abortus (strain DSM 27085 / S26/3) (Chlamydophila abortus).